We begin with the raw amino-acid sequence, 198 residues long: tRNA (pseudouridine(54)-N(1))-methyltransferase (198 aa).

S-adenosyl-L-methionine is bound at residue L128.

Belongs to the methyltransferase superfamily. TrmY family. In terms of assembly, homodimer.

It localises to the cytoplasm. It catalyses the reaction pseudouridine(54) in tRNA + S-adenosyl-L-methionine = N(1)-methylpseudouridine(54) in tRNA + S-adenosyl-L-homocysteine + H(+). Functionally, specifically catalyzes the N1-methylation of pseudouridine at position 54 (Psi54) in tRNAs. The sequence is that of tRNA (pseudouridine(54)-N(1))-methyltransferase from Natronomonas pharaonis (strain ATCC 35678 / DSM 2160 / CIP 103997 / JCM 8858 / NBRC 14720 / NCIMB 2260 / Gabara) (Halobacterium pharaonis).